The following is a 173-amino-acid chain: Translation initiation factor IF-3 (173 aa).

It belongs to the IF-3 family. In terms of assembly, monomer.

It localises to the cytoplasm. Its function is as follows. IF-3 binds to the 30S ribosomal subunit and shifts the equilibrium between 70S ribosomes and their 50S and 30S subunits in favor of the free subunits, thus enhancing the availability of 30S subunits on which protein synthesis initiation begins. This Parvibaculum lavamentivorans (strain DS-1 / DSM 13023 / NCIMB 13966) protein is Translation initiation factor IF-3.